The primary structure comprises 240 residues: UDP-2,3-diacylglucosamine hydrolase (240 aa).

Mn(2+) is bound by residues aspartate 8, histidine 10, aspartate 41, asparagine 79, and histidine 114. A substrate-binding site is contributed by 79 to 80 (NR). 5 residues coordinate substrate: aspartate 122, serine 160, asparagine 164, lysine 167, and histidine 195. Residues histidine 195 and histidine 197 each contribute to the Mn(2+) site.

The protein belongs to the LpxH family. Mn(2+) is required as a cofactor.

Its subcellular location is the cell inner membrane. It catalyses the reaction UDP-2-N,3-O-bis[(3R)-3-hydroxytetradecanoyl]-alpha-D-glucosamine + H2O = 2-N,3-O-bis[(3R)-3-hydroxytetradecanoyl]-alpha-D-glucosaminyl 1-phosphate + UMP + 2 H(+). The protein operates within glycolipid biosynthesis; lipid IV(A) biosynthesis; lipid IV(A) from (3R)-3-hydroxytetradecanoyl-[acyl-carrier-protein] and UDP-N-acetyl-alpha-D-glucosamine: step 4/6. Its function is as follows. Hydrolyzes the pyrophosphate bond of UDP-2,3-diacylglucosamine to yield 2,3-diacylglucosamine 1-phosphate (lipid X) and UMP by catalyzing the attack of water at the alpha-P atom. Involved in the biosynthesis of lipid A, a phosphorylated glycolipid that anchors the lipopolysaccharide to the outer membrane of the cell. The polypeptide is UDP-2,3-diacylglucosamine hydrolase (Escherichia coli O7:K1 (strain IAI39 / ExPEC)).